A 422-amino-acid chain; its full sequence is MPNHSPRFISNLTRETYALILAGGRGSRLFELTDWRAKPALYFGGKFRVIDFPLSNCVNSGIRRIGVVTQYQSHSLIRHVMRGWGHFKRELGESVEILPASQRYSESWYQGTADAVFQNIDIIRHELPRYVMILSGDHVYRMDYAGMLAAHAQSGADMTVCCQEVPVAEAAGSFGVMEVAEDMRVVGFEEKPANPSCLPHDPERCLASMGNYVFNTEFLFDQLRKDAENVSSERDFGKDIIPSIIREHKVFAYAFKSGLGAGQDYWRDVGTLDTFWQANMELLSPEPHLNLYDAKWPIWTYQEQLPPAKFVFDDEDRRGMATDSIVSGGCIISGAKVKRSVLFNEVRICSYSEVEGAVILPDVVVLRNCRLKNVIIDRGCVIPEGMVIGHNHDHDRARGFRVTDKGVVLITREMLGLPVGFE.

Residues Y109, G175, 190-191 (EK), and S208 each bind alpha-D-glucose 1-phosphate.

The protein belongs to the bacterial/plant glucose-1-phosphate adenylyltransferase family. Homotetramer.

It carries out the reaction alpha-D-glucose 1-phosphate + ATP + H(+) = ADP-alpha-D-glucose + diphosphate. The protein operates within glycan biosynthesis; glycogen biosynthesis. Functionally, involved in the biosynthesis of ADP-glucose, a building block required for the elongation reactions to produce glycogen. Catalyzes the reaction between ATP and alpha-D-glucose 1-phosphate (G1P) to produce pyrophosphate and ADP-Glc. The chain is Glucose-1-phosphate adenylyltransferase from Shewanella amazonensis (strain ATCC BAA-1098 / SB2B).